We begin with the raw amino-acid sequence, 398 residues long: Steroid C26-monooxygenase (398 aa).

Cysteine 340 provides a ligand contact to heme.

It belongs to the cytochrome P450 family. The cofactor is heme.

It catalyses the reaction cholest-4-en-3-one + 6 reduced [2Fe-2S]-[ferredoxin] + 3 O2 + 5 H(+) = (25R)-3-oxocholest-4-en-26-oate + 6 oxidized [2Fe-2S]-[ferredoxin] + 4 H2O. The enzyme catalyses cholest-4-en-3-one + 2 reduced [2Fe-2S]-[ferredoxin] + O2 + 2 H(+) = (25R)-3-oxocholest-4-en-26-ol + 2 oxidized [2Fe-2S]-[ferredoxin] + H2O. The catalysed reaction is (25R)-3-oxocholest-4-en-26-ol + 2 reduced [2Fe-2S]-[ferredoxin] + O2 + 2 H(+) = (25R)-3-oxocholest-4-en-26-al + 2 oxidized [2Fe-2S]-[ferredoxin] + 2 H2O. It carries out the reaction (25R)-3-oxocholest-4-en-26-al + 2 reduced [2Fe-2S]-[ferredoxin] + O2 + H(+) = (25R)-3-oxocholest-4-en-26-oate + 2 oxidized [2Fe-2S]-[ferredoxin] + H2O. It catalyses the reaction cholesterol + NADPH + O2 + H(+) = 26-hydroxycholesterol + NADP(+) + H2O. The enzyme catalyses 26-hydroxycholesterol + 2 reduced [2Fe-2S]-[ferredoxin] + O2 + 2 H(+) = (3beta)-hydroxy-cholest-5-en-26-al + 2 oxidized [2Fe-2S]-[ferredoxin] + 2 H2O. The catalysed reaction is (3beta)-hydroxy-cholest-5-en-26-al + NADPH + O2 = (3beta)-hydroxy-cholest-5-en-26-oate + NADP(+) + H2O. It carries out the reaction (25S)-3-oxocholest-4-en-26-ol + 2 reduced [2Fe-2S]-[ferredoxin] + O2 + 2 H(+) = (25S)-3-oxocholest-4-en-26-al + 2 oxidized [2Fe-2S]-[ferredoxin] + 2 H2O. It catalyses the reaction (25S)-3-oxocholest-4-en-26-al + 2 reduced [2Fe-2S]-[ferredoxin] + O2 + H(+) = (25S)-3-oxocholest-4-en-26-oate + 2 oxidized [2Fe-2S]-[ferredoxin] + H2O. It functions in the pathway steroid metabolism; cholesterol degradation. Inhibited by econazole, clotrimazole and miconazole. Its function is as follows. Involved in the utilization of cholesterol as the sole carbon and energy source by degrading the side chain during infection. Primarily catalyzes the sequential oxidation of the terminal methyl of cholest-4-en-3-one into (25R)-26-hydroxycholest-4-en-3-one (alcohol), (25R)-26-oxocholest-4-en-3-one (aldehyde), to finally yield the carboxylic acid (25R)-3-oxocholest-4-en-26-oate. In vitro, Cyp142 catalyzes with equal preference the oxidation of both (25R)- and (25S)-26-hydroxycholest-4-en-3-one diastereomers to the corresponding carboxylic acid which is a prerequisite for entry into the beta-oxidation pathway. Also able to sequentially oxidize cholesterol itself, not only cholest-4-en-3-one. The chain is Steroid C26-monooxygenase (cyp142) from Mycobacterium tuberculosis (strain ATCC 25618 / H37Rv).